A 953-amino-acid chain; its full sequence is Zinc finger CCCH domain-containing protein 18 (953 aa).

Residue Met1 is modified to N-acetylmethionine. Positions 1–14 (MDVAESPERDPHSP) are enriched in basic and acidic residues. Disordered regions lie at residues 1 to 222 (MDVA…RPRP) and 391 to 928 (QYTE…LSRR). The residue at position 6 (Ser6) is a Phosphoserine. Positions 15–26 (EDEEQPQGLSDD) are enriched in acidic residues. A phosphoserine mark is found at Ser34, Ser46, Ser53, Ser59, Ser67, Ser74, Ser78, Ser83, and Ser95. A compositionally biased stretch (acidic residues) spans 60–72 (QEEEDNHSDEEDR). A compositionally biased stretch (acidic residues) spans 97-106 (CEEEGDEGEE). Positions 105–134 (EEDRTSDLRDEASSVTRELDEHELDYDEEV) form a coiled coil. The segment covering 107-124 (DRTSDLRDEASSVTRELD) has biased composition (basic and acidic residues). Position 109 is a phosphothreonine (Thr109). Residues Ser110 and Ser118 each carry the phosphoserine modification. Composition is skewed to acidic residues over residues 125 to 136 (EHELDYDEEVPE) and 143 to 158 (QEDE…DEEK). Residues 159–168 (GEGTPREEGK) show a composition bias toward basic and acidic residues. At Thr162 the chain carries Phosphothreonine. A phosphoserine mark is found at Ser173 and Ser179. Residues 175 to 190 (GEKESLEAAKEKKKED) are compositionally biased toward basic and acidic residues. Over residues 191-207 (DDGEIDDGEIDDDDLEE) the composition is skewed to acidic residues. Basic and acidic residues predominate over residues 208–217 (GEVKDPSDRK). The C3H1-type zinc-finger motif lies at 219–245 (RPRPTCRFFMKGNCTWGMNCRFIHPGV). Residues 396-482 (EPYHNYRERE…EKEREKEKGK (87 aa)) show a composition bias toward basic and acidic residues. Residues 399-464 (HNYRERERER…RERAKRDEKD (66 aa)) are a coiled coil. Ser487 bears the Phosphoserine mark. Lys510 participates in a covalent cross-link: Glycyl lysine isopeptide (Lys-Gly) (interchain with G-Cter in SUMO2). The span at 510–520 (KRADEWKDPWR) shows a compositional bias: basic and acidic residues. A phosphoserine mark is found at Ser532, Ser534, and Ser536. The segment covering 545–606 (SASSASASNS…SRSRSFSSSP (62 aa)) has biased composition (low complexity). Residues Lys622 and Lys661 each participate in a glycyl lysine isopeptide (Lys-Gly) (interchain with G-Cter in SUMO2) cross-link. The span at 661 to 670 (KPGDPREARR) shows a compositional bias: basic and acidic residues. 2 stretches are compositionally biased toward low complexity: residues 692-725 (GSSY…SAHS) and 736-750 (ASPV…PAPA). Residues 760–774 (KKEDGVKEEKRKRDS) show a composition bias toward basic and acidic residues. Lys766 is covalently cross-linked (Glycyl lysine isopeptide (Lys-Gly) (interchain with G-Cter in SUMO2)). Residues 778-798 (PPKSAKPPAGGKSSQQPSTPQ) show a composition bias toward low complexity. Lys814 is subject to N6-acetyllysine. Residue Lys817 forms a Glycyl lysine isopeptide (Lys-Gly) (interchain with G-Cter in SUMO2) linkage. The segment covering 824 to 841 (AADKGSRKRYEPSDKDRQ) has biased composition (basic and acidic residues). A phosphoserine mark is found at Ser842, Ser852, Ser868, Ser893, and Ser896. Over residues 893–906 (SPQSKSSSKVTSVP) the composition is skewed to low complexity. Lys908 participates in a covalent cross-link: Glycyl lysine isopeptide (Lys-Gly) (interchain with G-Cter in SUMO2). Residues 916–925 (STKSGKASTL) are compositionally biased toward polar residues. Residues 921–950 (KASTLSRREELLKQLKAVEDAIARKRAKIP) are a coiled coil.

Interacts with ZFC3H1 in a RNase-insensitive manner.

It localises to the nucleus. The polypeptide is Zinc finger CCCH domain-containing protein 18 (Homo sapiens (Human)).